The following is a 123-amino-acid chain: ATP synthase epsilon chain (123 aa).

Belongs to the ATPase epsilon chain family. In terms of assembly, F-type ATPases have 2 components, CF(1) - the catalytic core - and CF(0) - the membrane proton channel. CF(1) has five subunits: alpha(3), beta(3), gamma(1), delta(1), epsilon(1). CF(0) has three main subunits: a, b and c.

The protein resides in the cell inner membrane. Functionally, produces ATP from ADP in the presence of a proton gradient across the membrane. This Helicobacter pylori (strain Shi470) protein is ATP synthase epsilon chain.